A 92-amino-acid chain; its full sequence is MKVSTAAFAVLLTAAAFCTPASASPYASDTTPCCFAYLSHPLPLTHLQEYFYTSSKCSMPAVVFVTRRKRQVCANPQKKWVRDKGINSLEMN.

The N-terminal stretch at 1-23 is a signal peptide; sequence MKVSTAAFAVLLTAAAFCTPASA. Intrachain disulfides connect Cys-33-Cys-57 and Cys-34-Cys-73.

Belongs to the intercrine beta (chemokine CC) family.

It is found in the secreted. Functionally, chemoattractant for blood monocytes, memory T-helper cells and eosinophils. Causes the release of histamine from basophils and activates eosinophils. May activate several chemokine receptors including CCR1, CCR3, CCR4 and CCR5. May also be an agonist of the G protein-coupled receptor GPR75. Together with GPR75, may play a role in neuron survival through activation of a downstream signaling pathway involving the PI3, Akt and MAP kinases. By activating GPR75 may also play a role in insulin secretion by islet cells. The polypeptide is C-C motif chemokine 5 (CCL5) (Felis catus (Cat)).